The following is a 940-amino-acid chain: Acetyl-coenzyme A synthetase (940 aa).

Positions 1–33 (MCCAIWSASRAPACSASQLSSSHAVRPSVVPDA) are cleaved as a signal peptide. The tract at residues 1-289 (MCCAIWSASR…VQRSVTRLTA (289 aa)) is unknown. Disordered regions lie at residues 70–127 (TARA…RPRC), 157–202 (VAPP…ADSA), and 224–274 (ASSQ…QQTC). 2 stretches are compositionally biased toward polar residues: residues 72-95 (RATT…TAAS) and 107-120 (SSIS…TSGS). Composition is skewed to low complexity over residues 184–202 (TAPP…ADSA) and 224–245 (ASSQ…SGRS). Over residues 258–274 (SSPTVQRNQTTVHQQTC) the composition is skewed to polar residues. The interval 290–940 (MSNPSHAEVP…SVFEAIRASK (651 aa)) is acetyl-coenzyme A synthetase. CoA is bound by residues 480–483 (RRGK) and Thr599. Residues 675 to 677 (GEP), 699 to 704 (DTWWQT), Asp796, and Arg811 each bind ATP. Residue Ser819 participates in CoA binding. Arg822 lines the ATP pocket. Positions 833, 835, and 838 each coordinate Mg(2+). An N6-acetyllysine modification is found at Lys906.

This sequence belongs to the ATP-dependent AMP-binding enzyme family. Mg(2+) serves as cofactor. Post-translationally, acetylated on Lys-906 by Pat in the presence of acetyl-CoA as an acetyl donor and ATP. Acetylation results in the inactivation of the enzyme. Deacetylation by the SIR2-homolog deacetylase CobB is required to activate the enzyme.

It carries out the reaction acetate + ATP + CoA = acetyl-CoA + AMP + diphosphate. Catalyzes the conversion of acetate into acetyl-CoA (AcCoA), an essential intermediate at the junction of anabolic and catabolic pathways. AcsA undergoes a two-step reaction. In the first half reaction, AcsA combines acetate with ATP to form acetyl-adenylate (AcAMP) intermediate. In the second half reaction, it can then transfer the acetyl group from AcAMP to the sulfhydryl group of CoA, forming the product AcCoA. This chain is Acetyl-coenzyme A synthetase (acsA), found in Mycolicibacterium smegmatis (strain ATCC 700084 / mc(2)155) (Mycobacterium smegmatis).